The following is a 70-amino-acid chain: Metallothionein-like protein 1 (70 aa).

This sequence belongs to the metallothionein superfamily. Type 15 family.

In terms of biological role, metallothioneins have a high content of cysteine residues that bind various heavy metals. This chain is Metallothionein-like protein 1 (MT1), found in Festuca rubra (Red fescue).